A 744-amino-acid polypeptide reads, in one-letter code: Tripartite motif-containing protein 2 (744 aa).

At Ser-10 the chain carries Phosphoserine. The segment at 23-64 adopts an RING-type zinc-finger fold; it reads CSICLERYKNPKVLPCLHTFCERCLQNYIPAHSLTLSCPVCR. The B box-type zinc finger occupies 113–154; that stretch reads GKPLSCPNHDGNVMDFYCQSCETAMCRECTEGEHAEHPTVPL. Cys-118, His-121, Cys-141, and His-146 together coordinate Zn(2+). The Filamin repeat unit spans residues 320–421; sequence TTNAVASETV…IRGSPFKLKV (102 aa). A Phosphothreonine modification is found at Thr-371. A phosphoserine mark is found at Ser-375, Ser-424, and Ser-428. The interval 432–462 is disordered; it reads EGVKRRVKSPGSGHVKQKAVKRPASMYSTGK. NHL repeat units lie at residues 473–516, 520–563, 564–605, 609–652, 656–699, and 700–743; these read IFRV…FSND, KSRF…FSSD, GKFK…FQPN, VTRF…FNQE, MLKF…FDGS, and GSFL…YRYL.

Belongs to the TRIM/RBCC family. In terms of assembly, forms homooligomers. Interacts with TRIM3; this interaction reduces TRIM2 activity. Interacts with myosin V; myosin V may not be a substrate for ubiquitination. Interacts with NEFL. Interacts with phosphorylated BCL2L11. Interacts with SIRPA. RING-type zinc finger-dependent and UBE2D1-dependent autoubiquitination.

Its subcellular location is the cytoplasm. The enzyme catalyses S-ubiquitinyl-[E2 ubiquitin-conjugating enzyme]-L-cysteine + [acceptor protein]-L-lysine = [E2 ubiquitin-conjugating enzyme]-L-cysteine + N(6)-ubiquitinyl-[acceptor protein]-L-lysine.. The protein operates within protein modification; protein ubiquitination. Functionally, UBE2D1-dependent E3 ubiquitin-protein ligase that mediates the ubiquitination of NEFL and of phosphorylated BCL2L11. Plays a neuroprotective function. May play a role in neuronal rapid ischemic tolerance. Plays a role in antiviral immunity and limits New World arenavirus infection independently of its ubiquitin ligase activity. The protein is Tripartite motif-containing protein 2 (TRIM2) of Ailuropoda melanoleuca (Giant panda).